The following is a 338-amino-acid chain: Lipoate-protein ligase A (338 aa).

A BPL/LPL catalytic domain is found at 29 to 216 (PATQRVLFLW…AFFAHYGERV (188 aa)). ATP-binding positions include R71, 76–79 (GAVF), and K134. K134 is a binding site for (R)-lipoate.

It belongs to the LplA family. Monomer.

Its subcellular location is the cytoplasm. It carries out the reaction L-lysyl-[lipoyl-carrier protein] + (R)-lipoate + ATP = N(6)-[(R)-lipoyl]-L-lysyl-[lipoyl-carrier protein] + AMP + diphosphate + H(+). The protein operates within protein modification; protein lipoylation via exogenous pathway; protein N(6)-(lipoyl)lysine from lipoate: step 1/2. It participates in protein modification; protein lipoylation via exogenous pathway; protein N(6)-(lipoyl)lysine from lipoate: step 2/2. In terms of biological role, catalyzes both the ATP-dependent activation of exogenously supplied lipoate to lipoyl-AMP and the transfer of the activated lipoyl onto the lipoyl domains of lipoate-dependent enzymes. The sequence is that of Lipoate-protein ligase A from Salmonella dublin (strain CT_02021853).